The following is a 594-amino-acid chain: NADH-quinone oxidoreductase subunit C/D (594 aa).

The interval 1-185 (MTTGSALYIP…DPFSLNLAKQ (185 aa)) is NADH dehydrogenase I subunit C. Residues 209-594 (DYMFLNLGPN…IDFVMADVDR (386 aa)) form an NADH dehydrogenase I subunit D region.

This sequence in the N-terminal section; belongs to the complex I 30 kDa subunit family. In the C-terminal section; belongs to the complex I 49 kDa subunit family. As to quaternary structure, NDH-1 is composed of 13 different subunits. Subunits NuoB, CD, E, F, and G constitute the peripheral sector of the complex.

It is found in the cell inner membrane. The enzyme catalyses a quinone + NADH + 5 H(+)(in) = a quinol + NAD(+) + 4 H(+)(out). In terms of biological role, NDH-1 shuttles electrons from NADH, via FMN and iron-sulfur (Fe-S) centers, to quinones in the respiratory chain. The immediate electron acceptor for the enzyme in this species is believed to be ubiquinone. Couples the redox reaction to proton translocation (for every two electrons transferred, four hydrogen ions are translocated across the cytoplasmic membrane), and thus conserves the redox energy in a proton gradient. The polypeptide is NADH-quinone oxidoreductase subunit C/D (Pseudomonas fluorescens (strain SBW25)).